The sequence spans 2667 residues: eIF-2-alpha kinase activator GCN1 (2667 aa).

HEAT repeat units lie at residues 19-56 (DSFY…HELS), 95-132 (QWIF…VKFT), 159-198 (SFSL…LQHM), 293-330 (DLQS…DFNV), 336-375 (LLKS…RSKD), 398-439 (SQKL…SISI), 466-503 (ELPE…PEAN), and 794-832 (LLNE…ELFV). Positions 842 to 879 (RNDRKVKPKTAEEQRDEESRKRIEEKKKIQSGELEKQE) are disordered. 18 HEAT repeats span residues 929 to 967 (PIIV…LDRS), 985 to 1024 (LSEI…IIKN), 1085 to 1122 (GVET…IYSP), 1199 to 1237 (HMIP…ATAL), 1290 to 1330 (GELL…HMDA), 1333 to 1370 (PKVS…SFKK), 1371 to 1407 (QGDR…VKGL), 1412 to 1450 (LKNY…TIGR), 1454 to 1491 (PYII…QLSG), 1492 to 1529 (HGVK…CAPK), 1533 to 1570 (SCLP…VIRN), 1572 to 1608 (EIQI…HTID), 1610 to 1647 (ASLS…LTEP), 1652 to 1689 (PYLN…GMGE), 1691 to 1728 (NFST…SLDI), 1729 to 1766 (SRFN…SLGD), 1770 to 1807 (PYLP…QFAV), and 1809 to 1845 (GIEV…KLAG). The interval 1853–1875 (SNNSSYNAKDDDDDEPGSSGNDI) is disordered. HEAT repeat units lie at residues 1882–1919 (ERLG…NTPK), 1923–1960 (EILP…KLSD), 1962–1998 (ILPE…SAKT), 2002–2039 (PYLS…TFGS), 2040–2078 (KASN…VRSS), 2080–2110 (VLPV…DAGE), 2114–2152 (VHLS…SIDE), 2154–2190 (GWDT…GNTM), 2193–2230 (EYPE…SLKK), and 2264–2301 (KGLA…HTSA). The tract at residues 2265–2412 (GLASVLPVLI…ISQESKLRAL (148 aa)) is RWDBD region. The stretch at 2326-2348 (QVKSAILQTLSLLISKSPASMKI) is one HEAT 37; degenerate repeat. An HEAT 38; degenerate repeat occupies 2349–2385 (FLHQLQPTFIKCLSDSHKNVRTNAASALGLLMTLSSS). HEAT repeat units follow at residues 2387–2421 (DQLV…KKPK), 2425–2462 (ATLD…CFTS), 2508–2545 (PNMP…ASPL), and 2546–2583 (TYAK…SNQQ).

This sequence belongs to the GCN1 family. In terms of assembly, interacts with eif2ak4/gcn2; this interaction stimulates the eif2ak4/gcn2 kinase activity and is impaired by impact upon a variety of stress conditions, such as amino acid depletion, UV-C irradiation, proteasome inhibitor treatment and glucose deprivation. Interacts with impact; this prevents the interaction of gcn1 with eif2ak4/gcn2 and inhibits eif2ak4/gcn2 kinase activity.

The protein localises to the cytoplasm. Ribosome collision sensor that activates a translation quality control pathway when a ribosome has stalled during translation. Directly binds to the ribosome and acts as a sentinel for colliding ribosomes. Gcn1 also acts as a positive activator of the integrated stress response (ISR) by mediating activation of eif2ak4/gcn2 in response to amino acid starvation. Interaction with eif2ak4/gcn2 on translating ribosomes stimulates eif2ak4/gcn2 kinase activity, leading to phosphorylation of eukaryotic translation initiation factor 2 (eIF-2-alpha/eif2s1). EIF2S1/eIF-2-alpha phosphorylation converts EIF2S1/eIF-2-alpha into a global protein synthesis inhibitor, leading to a global attenuation of cap-dependent translation, and thus to a reduced overall utilization of amino acids, while concomitantly initiating the preferential translation of ISR-specific mRNAs, such as the transcriptional activator atf4, and hence allowing atf4-mediated reprogramming of amino acid biosynthetic gene expression to alleviate nutrient depletion. The chain is eIF-2-alpha kinase activator GCN1 from Dictyostelium discoideum (Social amoeba).